Here is a 400-residue protein sequence, read N- to C-terminus: Probable vacuolar protease A (400 aa).

The N-terminal stretch at M1–A18 is a signal peptide. The propeptide at K19–E72 is activation peptide. The region spanning Y87–A397 is the Peptidase A1 domain. The active site involves D105. The cysteines at positions 118 and 123 are disulfide-linked. N140 carries N-linked (GlcNAc...) asparagine glycosylation. Residue D289 is part of the active site. Residues C323 and C356 are joined by a disulfide bond. N340 is a glycosylation site (N-linked (GlcNAc...) asparagine).

Belongs to the peptidase A1 family.

The protein resides in the vacuole lumen. It is found in the secreted. It carries out the reaction Hydrolysis of proteins with broad specificity for peptide bonds. Cleaves -Leu-Leu-|-Val-Tyr- bond in a synthetic substrate. Does not act on esters of Tyr or Arg.. Vacuolar aspartic endopeptidase which is probably also secreted and contributes to virulence. In Trichophyton verrucosum (strain HKI 0517), this protein is Probable vacuolar protease A (PEP2).